We begin with the raw amino-acid sequence, 259 residues long: Activator of lactoyl-CoA dehydratase (259 aa).

[4Fe-4S] cluster contacts are provided by C125 and C164.

Homodimer. Requires [4Fe-4S] cluster as cofactor.

Functionally, required for the activation of lactoyl-CoA dehydratase. This protein is extremely sensitive towards oxygen. The chain is Activator of lactoyl-CoA dehydratase (lcdC) from Anaerotignum propionicum (Clostridium propionicum).